The chain runs to 218 residues: Kappa-scoloptoxin(11)-Ssd1b (218 aa).

A signal peptide spans 1 to 16 (MFYSHLLFFTFTFACS). A propeptide spanning residues 17–25 (SSLNRKTKR) is cleaved from the precursor.

Post-translationally, contains 8 disulfide bonds. As to expression, expressed by the venom gland.

It is found in the secreted. Functionally, voltage-gated potassium channel inhibitor. This Scolopendra dehaani (Thai centipede) protein is Kappa-scoloptoxin(11)-Ssd1b.